A 483-amino-acid polypeptide reads, in one-letter code: tRNA sulfurtransferase (483 aa).

The 105-residue stretch at 62–166 (PEICDALTRI…QDKLILVKAR (105 aa)) folds into the THUMP domain. ATP-binding positions include 184 to 185 (LI), Lys-266, Gly-288, and Gln-297. An intrachain disulfide couples Cys-345 to Cys-457. Residues 405 to 483 (LADTDVLLDI…GYTNVKVYRP (79 aa)) enclose the Rhodanese domain. Cys-457 functions as the Cysteine persulfide intermediate in the catalytic mechanism.

It belongs to the ThiI family.

It localises to the cytoplasm. It carries out the reaction [ThiI sulfur-carrier protein]-S-sulfanyl-L-cysteine + a uridine in tRNA + 2 reduced [2Fe-2S]-[ferredoxin] + ATP + H(+) = [ThiI sulfur-carrier protein]-L-cysteine + a 4-thiouridine in tRNA + 2 oxidized [2Fe-2S]-[ferredoxin] + AMP + diphosphate. It catalyses the reaction [ThiS sulfur-carrier protein]-C-terminal Gly-Gly-AMP + S-sulfanyl-L-cysteinyl-[cysteine desulfurase] + AH2 = [ThiS sulfur-carrier protein]-C-terminal-Gly-aminoethanethioate + L-cysteinyl-[cysteine desulfurase] + A + AMP + 2 H(+). Its pathway is cofactor biosynthesis; thiamine diphosphate biosynthesis. In terms of biological role, catalyzes the ATP-dependent transfer of a sulfur to tRNA to produce 4-thiouridine in position 8 of tRNAs, which functions as a near-UV photosensor. Also catalyzes the transfer of sulfur to the sulfur carrier protein ThiS, forming ThiS-thiocarboxylate. This is a step in the synthesis of thiazole, in the thiamine biosynthesis pathway. The sulfur is donated as persulfide by IscS. This Yersinia pseudotuberculosis serotype IB (strain PB1/+) protein is tRNA sulfurtransferase.